The chain runs to 316 residues: Metal tolerance protein 8 (316 aa).

Residues 1 to 15 (MGPVRHILNERKSRK) lie on the Cytoplasmic side of the membrane. Residues 16–36 (IAAFLLINTAYMFVEFTSGFM) traverse the membrane as a helical segment. Residues 37–45 (SDSLGLISD) are Vacuolar-facing. A helical membrane pass occupies residues 46–66 (ACHMLFDCAALAIGLYASYIA). Residues 67 to 80 (RLPANGLYNYGRGR) are Cytoplasmic-facing. Residues 81–101 (FEVLSGYVNAVFLVLVGALIV) traverse the membrane as a helical segment. Residues 102 to 116 (LESFERILEPREIST) lie on the Vacuolar side of the membrane. Residues 117-137 (SSLLTVSIGGLVVNVIGLVFF) form a helical membrane-spanning segment. At 138–176 (HEEHHHAHGEAHSCNGGLQSSENHNKSRNRHHIDHNMEG) the chain is on the cytoplasmic side. The segment at 147 to 166 (EAHSCNGGLQSSENHNKSRN) is disordered. A helical membrane pass occupies residues 177 to 197 (IFLHVLADTMGSVGVVISTLL). Residues 198 to 202 (IKYKG) lie on the Vacuolar side of the membrane. Residues 203–223 (WLIADPICSVFISIMIVSSVL) traverse the membrane as a helical segment. The Cytoplasmic segment spans residues 224 to 316 (PLLRNSAEIL…LTIQIECVKR (93 aa)).

This sequence belongs to the cation diffusion facilitator (CDF) transporter (TC 2.A.4) family. SLC30A subfamily.

It localises to the vacuole membrane. Functionally, involved in sequestration of excess metal in the cytoplasm into vacuoles to maintain metal homeostasis. The polypeptide is Metal tolerance protein 8 (MTP8) (Oryza sativa subsp. japonica (Rice)).